A 306-amino-acid polypeptide reads, in one-letter code: Uracil phosphoribosyltransferase homolog (306 aa).

Disordered regions lie at residues Met-1–Pro-28 and Ser-58–Ala-87. Composition is skewed to polar residues over residues Cys-13–Pro-28 and Gly-70–Asn-79. GTP is bound by residues Arg-130, Arg-139, and Glu-173–Asn-176. Residue Arg-183 coordinates 5-phospho-alpha-D-ribose 1-diphosphate. GTP contacts are provided by Arg-200 and Arg-229. Residue Tyr-235–Thr-243 coordinates 5-phospho-alpha-D-ribose 1-diphosphate. Residue Thr-296 to Phe-298 participates in uracil binding.

Belongs to the UPRTase family.

The protein localises to the cytoplasm. It localises to the nucleus. The protein is Uracil phosphoribosyltransferase homolog (UPRT) of Bos taurus (Bovine).